The chain runs to 675 residues: Potassium-transporting ATPase ATP-binding subunit (675 aa).

A run of 4 helical transmembrane segments spans residues 34 to 54 (IMFVVEVGMILTLILICFPDI), 65 to 85 (LITIFIILLITILFANFSEAF), 216 to 236 (IALFTLLTTLTIIFLVVIVTL), and 245 to 265 (LILPIAMLIALTVCLIPTTIG). D304 serves as the catalytic 4-aspartylphosphate intermediate. ATP-binding positions include D341, E345, 372–379 (FTAETRMS), and K390. D513 and D517 together coordinate Mg(2+). Transmembrane regions (helical) follow at residues 569–591 (ALTTFSLANDVAKYFAILPALMM), 611–631 (AIISALIFNALIIVALIPIAM), and 644–664 (IFINNMLIYGLGGLIVPFLGI).

It belongs to the cation transport ATPase (P-type) (TC 3.A.3) family. Type IA subfamily. The system is composed of three essential subunits: KdpA, KdpB and KdpC.

The protein localises to the cell membrane. It catalyses the reaction K(+)(out) + ATP + H2O = K(+)(in) + ADP + phosphate + H(+). Part of the high-affinity ATP-driven potassium transport (or Kdp) system, which catalyzes the hydrolysis of ATP coupled with the electrogenic transport of potassium into the cytoplasm. This subunit is responsible for energy coupling to the transport system and for the release of the potassium ions to the cytoplasm. The chain is Potassium-transporting ATPase ATP-binding subunit from Staphylococcus aureus (strain bovine RF122 / ET3-1).